Reading from the N-terminus, the 94-residue chain is Small ribosomal subunit protein bS18 (94 aa).

The protein belongs to the bacterial ribosomal protein bS18 family. As to quaternary structure, part of the 30S ribosomal subunit. Forms a tight heterodimer with protein bS6.

Its function is as follows. Binds as a heterodimer with protein bS6 to the central domain of the 16S rRNA, where it helps stabilize the platform of the 30S subunit. This is Small ribosomal subunit protein bS18 from Leptospira biflexa serovar Patoc (strain Patoc 1 / Ames).